A 624-amino-acid chain; its full sequence is Probable pectinesterase/pectinesterase inhibitor 47 (624 aa).

An N-terminal signal peptide occupies residues Met-1 to Ala-19. The segment at Pro-24 to Cys-88 is disordered. Positions Thr-25 to Pro-84 are enriched in pro residues. The pectinesterase inhibitor 47 stretch occupies residues Gln-74–Leu-236. N-linked (GlcNAc...) asparagine glycosylation is found at Asn-225, Asn-330, Asn-369, and Asn-376. Positions Ala-307–Asp-606 are pectinesterase 47. Thr-385 contacts substrate. N-linked (GlcNAc...) asparagine glycosylation occurs at Asn-387. Residue Gln-415 coordinates substrate. Asp-438 functions as the Proton donor; for pectinesterase activity in the catalytic mechanism. An intrachain disulfide couples Cys-452 to Cys-472. Asp-459 functions as the Nucleophile; for pectinesterase activity in the catalytic mechanism. Residue Asn-505 is glycosylated (N-linked (GlcNAc...) asparagine). Positions 527 and 529 each coordinate substrate. 3 N-linked (GlcNAc...) asparagine glycosylation sites follow: Asn-555, Asn-596, and Asn-601.

This sequence in the N-terminal section; belongs to the PMEI family. It in the C-terminal section; belongs to the pectinesterase family.

The protein localises to the secreted. The protein resides in the cell wall. The catalysed reaction is [(1-&gt;4)-alpha-D-galacturonosyl methyl ester](n) + n H2O = [(1-&gt;4)-alpha-D-galacturonosyl](n) + n methanol + n H(+). Its pathway is glycan metabolism; pectin degradation; 2-dehydro-3-deoxy-D-gluconate from pectin: step 1/5. Its function is as follows. Acts in the modification of cell walls via demethylesterification of cell wall pectin. The protein is Probable pectinesterase/pectinesterase inhibitor 47 (PME47) of Arabidopsis thaliana (Mouse-ear cress).